Consider the following 276-residue polypeptide: Ribosomal RNA small subunit methyltransferase A (276 aa).

S-adenosyl-L-methionine is bound by residues Asn24, Leu26, Gly51, Glu72, Asp97, and Asn118.

The protein belongs to the class I-like SAM-binding methyltransferase superfamily. rRNA adenine N(6)-methyltransferase family. RsmA subfamily.

It localises to the cytoplasm. It carries out the reaction adenosine(1518)/adenosine(1519) in 16S rRNA + 4 S-adenosyl-L-methionine = N(6)-dimethyladenosine(1518)/N(6)-dimethyladenosine(1519) in 16S rRNA + 4 S-adenosyl-L-homocysteine + 4 H(+). Functionally, specifically dimethylates two adjacent adenosines (A1518 and A1519) in the loop of a conserved hairpin near the 3'-end of 16S rRNA in the 30S particle. May play a critical role in biogenesis of 30S subunits. In Clostridium acetobutylicum (strain ATCC 824 / DSM 792 / JCM 1419 / IAM 19013 / LMG 5710 / NBRC 13948 / NRRL B-527 / VKM B-1787 / 2291 / W), this protein is Ribosomal RNA small subunit methyltransferase A.